A 205-amino-acid chain; its full sequence is N-(5'-phosphoribosyl)anthranilate isomerase (205 aa).

It belongs to the TrpF family.

It catalyses the reaction N-(5-phospho-beta-D-ribosyl)anthranilate = 1-(2-carboxyphenylamino)-1-deoxy-D-ribulose 5-phosphate. It functions in the pathway amino-acid biosynthesis; L-tryptophan biosynthesis; L-tryptophan from chorismate: step 3/5. This Clostridium acetobutylicum (strain ATCC 824 / DSM 792 / JCM 1419 / IAM 19013 / LMG 5710 / NBRC 13948 / NRRL B-527 / VKM B-1787 / 2291 / W) protein is N-(5'-phosphoribosyl)anthranilate isomerase.